We begin with the raw amino-acid sequence, 230 residues long: Acetyltransferase (230 aa).

Residues 143-230 enclose the N-acetyltransferase domain; the sequence is RYLDGKVICD…RVAVYKARQT (88 aa).

Its pathway is mycotoxin biosynthesis. Its function is as follows. Acetyltransferase; part of the satratoxin SC3 cluster involved in the biosynthesis of satratoxins, trichothecene mycotoxins that are associated with human food poisonings. Satratoxins are suggested to be made by products of multiple gene clusters (SC1, SC2 and SC3) that encode 21 proteins in all, including polyketide synthases, acetyltransferases, and other enzymes expected to modify the trichothecene skeleton. SC1 encodes 10 proteins, SAT1 to SAT10. The largest are SAT8, which encodes a putative polyketide synthase (PKS) with a conventional non-reducing architecture, and SAT10, a putative protein containing four ankyrin repeats and thus may be involved in protein scaffolding. The putative short-chain reductase SAT3 may assist the PKS in some capacity. SAT6 contains a secretory lipase domain and acts probably as a trichothecene esterase. SAT5 encodes a putative acetyltransferase, and so, with SAT6, may affect endogenous protection from toxicity. The probable transcription factor SAT9 may regulate the expression of the SC1 cluster. SC2 encodes proteins SAT11 to SAT16, the largest of which encodes the putative reducing PKS SAT13. SAT11 is a cytochrome P450 monooxygenase, while SAT14 and SAT16 are probable acetyltransferases. The SC2 cluster may be regulated by the transcription factor SAT15. SC3 is a small cluster that encodes 5 proteins, SAT17 to SAT21. SAT21 is a putative MFS-type transporter which may have a role in exporting secondary metabolites. The four other proteins putatively encoded in SC3 include the taurine hydroxylase-like protein SAT17, the O-methyltransferase SAT18, the acetyltransferase SAT19, and the Cys6-type zinc finger SAT20, the latter being probably involved in regulation of SC3 expression. In Stachybotrys chartarum (strain CBS 109288 / IBT 7711) (Toxic black mold), this protein is Acetyltransferase.